A 238-amino-acid chain; its full sequence is MADS-box protein 04g005320 (238 aa).

The region spanning 1-61 (MGRGKVELKR…GKLYEFCSTS (61 aa)) is the MADS-box domain. Residues 87 to 177 (SQNNYQEYMK…KTKLEENSVA (91 aa)) enclose the K-box domain.

It localises to the nucleus. In terms of biological role, probable MADS-box transcription factor that functions with J2 and EJ2 in meristem maturation. This chain is MADS-box protein 04g005320, found in Solanum lycopersicum (Tomato).